The sequence spans 434 residues: F-box/kelch-repeat protein At1g55270 (434 aa).

An F-box domain is found at 76–122 (PPLLPGLPDDLAVACLIRVPRAEHRKLRLVCKRWYRLASGNFFYSQR). Kelch repeat units follow at residues 129 to 178 (EEWV…VLSG), 180 to 227 (HLYL…VINN), 229 to 276 (LYVA…VYDK), 278 to 321 (WFLK…SLNG), and 325 to 371 (GLDC…LHNK).

The sequence is that of F-box/kelch-repeat protein At1g55270 from Arabidopsis thaliana (Mouse-ear cress).